The primary structure comprises 322 residues: Probable transposase for insertion sequence element ISA1214 (322 aa).

It belongs to the transposase 11 family.

Functionally, involved in the transposition of the insertion sequence ISA1214. This Archaeoglobus fulgidus (strain ATCC 49558 / DSM 4304 / JCM 9628 / NBRC 100126 / VC-16) protein is Probable transposase for insertion sequence element ISA1214.